Reading from the N-terminus, the 336-residue chain is DNA-directed RNA polymerase subunit alpha (336 aa).

Residues 1-226 are alpha N-terminal domain (alpha-NTD); that stretch reads MLIAQRPTLS…ELFGLARELN (226 aa). The alpha C-terminal domain (alpha-CTD) stretch occupies residues 241–336; sequence AALAADMALP…DDAAFSDDEL (96 aa).

It belongs to the RNA polymerase alpha chain family. Homodimer. The RNAP catalytic core consists of 2 alpha, 1 beta, 1 beta' and 1 omega subunit. When a sigma factor is associated with the core the holoenzyme is formed, which can initiate transcription.

The catalysed reaction is RNA(n) + a ribonucleoside 5'-triphosphate = RNA(n+1) + diphosphate. Functionally, DNA-dependent RNA polymerase catalyzes the transcription of DNA into RNA using the four ribonucleoside triphosphates as substrates. The protein is DNA-directed RNA polymerase subunit alpha of Paenarthrobacter aurescens (strain TC1).